A 146-amino-acid polypeptide reads, in one-letter code: Cysteine protease inhibitor 3 (146 aa).

2 disulfide bridges follow: C8–C60 and C109–C115.

The protein belongs to the protease inhibitor I3 (leguminous Kunitz-type inhibitor) family.

It localises to the vacuole. Functionally, inhibitor of cysteine proteases. May protect the plant by inhibiting proteases of invading organisms. The sequence is that of Cysteine protease inhibitor 3 from Solanum tuberosum (Potato).